The following is a 142-amino-acid chain: Chorion class A protein Ld12 (142 aa).

A signal peptide spans 1–18; sequence MNSFALLLVCIQACLVQS.

It belongs to the chorion protein family.

Functionally, this protein is one of many from the eggshell of the gypsy moth. The protein is Chorion class A protein Ld12 of Lymantria dispar (Gypsy moth).